The chain runs to 209 residues: Uracil phosphoribosyltransferase (209 aa).

Residues arginine 79, arginine 104, and 131 to 139 (DPMLATGNS) each bind 5-phospho-alpha-D-ribose 1-diphosphate. Uracil contacts are provided by residues isoleucine 194 and 199-201 (GDA). Residue aspartate 200 coordinates 5-phospho-alpha-D-ribose 1-diphosphate.

It belongs to the UPRTase family. The cofactor is Mg(2+).

The catalysed reaction is UMP + diphosphate = 5-phospho-alpha-D-ribose 1-diphosphate + uracil. Its pathway is pyrimidine metabolism; UMP biosynthesis via salvage pathway; UMP from uracil: step 1/1. Its activity is regulated as follows. Allosterically activated by GTP. Functionally, catalyzes the conversion of uracil and 5-phospho-alpha-D-ribose 1-diphosphate (PRPP) to UMP and diphosphate. The polypeptide is Uracil phosphoribosyltransferase (Acidovorax sp. (strain JS42)).